We begin with the raw amino-acid sequence, 796 residues long: MQDPPRRLSAVPFLSSFFEGRRHSASDPILRLQQGRRSSAAKVLSSSSLQVMVAMSSVSCAERNPTCPERKRNSGRPTPKYTKVGERLRHVIPGHVACSMACGGKACKYENAARWSEQEQAVKGIYSSWVTDNILAMARPSTEVLEKFCIIEQFRSHGIKSIINLQRPGEHASCGNPLEQESGFTYLPEAFMEAGIYFYNFGWKDYGVASLTTILDMVKVMTFALQEGKVAIHCHAGLGRTGVLIACYLVFATRMTADQAIIFVRAKRPNSIQTRGQLLCVREFTQFLIPLRNIFSCCDPKAHAVTLAQYLIRQRHLLHGYEARLLKHIPKIIHLVCKLLLDLAENRPVVTEVADIPGLSAEIEKTVSEMITRQLDKELLRHDSDASDSFTPTAVVMDFENQDVVLSSEQELDPLWKRRNVECLQPLAHLKRQLSYSDSDLKRAESLLEQGRTPWTVPAQALLCHNPRQQKHISRCYSPQSPQLDLNKETLVRNTFSFWNHTKFGVPEGLKDDGSLIFHRTSIPKEVQRSRTFSSGISDSYNPGEPVTPNSANIPKGPNSSQQKVYHCECESHGGCGPSSVAEDGETCRRPVDCGSSPKAQFLGNETQNSKYLSEVAAHMPLQSELSVEARRILAAKALANLNEIAEKEEVKKKVEMWQKELNSRDGAWERICGEKDPFILCSLMWSWVEQLKEPVITKEDMDMLVDRCADASEALFLLEKGQQQTILCVLHCIVSLQTIPADVEEAVLARAIKAFTKVNFDSENGPIVYNTLKKIFKRTLEEKRKMTKDNPEPGI.

The region spanning 126–297 (YSSWVTDNIL…LIPLRNIFSC (172 aa)) is the Tyrosine-protein phosphatase domain. Residue Cys234 is the Phosphocysteine intermediate of the active site. Phosphoserine occurs at positions 435 and 437.

Belongs to the protein-tyrosine phosphatase family. Non-receptor class PTPDC1 subfamily.

Its function is as follows. May play roles in cilia formation and/or maintenance. This chain is Protein tyrosine phosphatase domain-containing protein 1 (PTPDC1), found in Bos taurus (Bovine).